The primary structure comprises 430 residues: Serine--tRNA ligase (430 aa).

Residue 237 to 239 coordinates L-serine; it reads TAE. An ATP-binding site is contributed by 268-270; the sequence is RSE. Position 291 (Glu291) interacts with L-serine. 355–358 serves as a coordination point for ATP; sequence EISS. Ser391 is an L-serine binding site.

This sequence belongs to the class-II aminoacyl-tRNA synthetase family. Type-1 seryl-tRNA synthetase subfamily. As to quaternary structure, homodimer. The tRNA molecule binds across the dimer.

The protein localises to the cytoplasm. The catalysed reaction is tRNA(Ser) + L-serine + ATP = L-seryl-tRNA(Ser) + AMP + diphosphate + H(+). The enzyme catalyses tRNA(Sec) + L-serine + ATP = L-seryl-tRNA(Sec) + AMP + diphosphate + H(+). It participates in aminoacyl-tRNA biosynthesis; selenocysteinyl-tRNA(Sec) biosynthesis; L-seryl-tRNA(Sec) from L-serine and tRNA(Sec): step 1/1. Functionally, catalyzes the attachment of serine to tRNA(Ser). Is also able to aminoacylate tRNA(Sec) with serine, to form the misacylated tRNA L-seryl-tRNA(Sec), which will be further converted into selenocysteinyl-tRNA(Sec). In Yersinia pseudotuberculosis serotype O:1b (strain IP 31758), this protein is Serine--tRNA ligase.